A 206-amino-acid polypeptide reads, in one-letter code: Guanylate kinase (206 aa).

Positions 6–185 constitute a Guanylate kinase-like domain; it reads GAILVLSGPS…AAKTLRIIAD (180 aa). Residue 13-20 coordinates ATP; that stretch reads GPSGAGKS.

The protein belongs to the guanylate kinase family.

It localises to the cytoplasm. The catalysed reaction is GMP + ATP = GDP + ADP. Its function is as follows. Essential for recycling GMP and indirectly, cGMP. In Sulfurimonas denitrificans (strain ATCC 33889 / DSM 1251) (Thiomicrospira denitrificans (strain ATCC 33889 / DSM 1251)), this protein is Guanylate kinase.